A 294-amino-acid chain; its full sequence is Endolytic peptidoglycan transglycosylase RlpA (294 aa).

The signal sequence occupies residues Met1 to Ala23. Positions Glu216–Thr291 constitute an SPOR domain.

It belongs to the RlpA family.

Functionally, lytic transglycosylase with a strong preference for naked glycan strands that lack stem peptides. This Pasteurella multocida (strain Pm70) protein is Endolytic peptidoglycan transglycosylase RlpA.